Consider the following 98-residue polypeptide: Integration host factor subunit alpha (98 aa).

The disordered stretch occupies residues 51–71 (NFDLRDKNERPGRNPKTGEDI). The segment covering 53-69 (DLRDKNERPGRNPKTGE) has biased composition (basic and acidic residues).

Belongs to the bacterial histone-like protein family. In terms of assembly, heterodimer of an alpha and a beta chain.

Functionally, this protein is one of the two subunits of integration host factor, a specific DNA-binding protein that functions in genetic recombination as well as in transcriptional and translational control. In Vibrio campbellii (strain ATCC BAA-1116), this protein is Integration host factor subunit alpha.